The chain runs to 269 residues: Putative phosphatase M6_Spy0533 (269 aa).

The Nucleophile role is filled by D9. Mg(2+) is bound at residue D9. I10 contacts phosphate. Position 11 (D11) interacts with Mg(2+). Phosphate contacts are provided by residues 43–44 (TG) and K196. D219 is a binding site for Mg(2+). N222 serves as a coordination point for phosphate.

Requires Mg(2+) as cofactor.

The protein is Putative phosphatase M6_Spy0533 of Streptococcus pyogenes serotype M6 (strain ATCC BAA-946 / MGAS10394).